The sequence spans 1209 residues: 3',5'-cyclic-AMP phosphodiesterase, isoform I (1209 aa).

Disordered regions lie at residues 16 to 35 (NVAK…GSGT), 59 to 82 (GGGS…KRKS), 275 to 353 (LYSG…PLPP), 372 to 403 (SATS…SPRI), 442 to 498 (ETLA…MQAE), 626 to 655 (VPAS…LSQG), and 754 to 792 (SAGQ…RLPT). Gly residues-rich tracts occupy residues 25-35 (SSNGTGNGSGT) and 59-77 (GGGS…GSGS). Residues 275-290 (LYSGSNPSTNPCQSAV) show a composition bias toward polar residues. The segment covering 291-314 (QNQGQNSNPNPNQNPNTNPNQNQQ) has biased composition (low complexity). The segment covering 315–324 (RCSCQPQTSP) has biased composition (polar residues). The segment covering 372–383 (SATSSSAGTVPP) has biased composition (low complexity). The span at 385–400 (GQQTQEYIAGTSSTPS) shows a compositional bias: polar residues. 2 stretches are compositionally biased toward low complexity: residues 445–462 (ASSS…NSSS) and 472–483 (TSSSASALATSH). 2 stretches are compositionally biased toward polar residues: residues 484–498 (PSNS…MQAE) and 627–645 (PASN…SRSG). A PDEase domain is found at 795–1124 (VETPRENELG…DYYQSMIPPS (330 aa)). The Proton donor role is filled by His871. 871-875 (HNSLH) provides a ligand contact to 3',5'-cyclic AMP. Positions 875, 911, 912, and 1029 each coordinate a divalent metal cation. The 3',5'-cyclic AMP site is built by Asp912, Asp1029, and Gln1080. Positions 1146 to 1163 (EESDQENLAELEEGDESG) are enriched in acidic residues. The tract at residues 1146–1209 (EESDQENLAE…CQNQPQHGGM (64 aa)) is disordered. The span at 1164-1181 (GESTTTGTTGTTAASALS) shows a compositional bias: low complexity. The segment covering 1182 to 1193 (GAGGGGGGGGGM) has biased composition (gly residues). The segment covering 1199–1209 (GCQNQPQHGGM) has biased composition (polar residues).

The protein belongs to the cyclic nucleotide phosphodiesterase family. PDE4 subfamily. As to quaternary structure, monomer. Requires a divalent metal cation as cofactor.

It catalyses the reaction 3',5'-cyclic AMP + H2O = AMP + H(+). It functions in the pathway purine metabolism; 3',5'-cyclic AMP degradation; AMP from 3',5'-cyclic AMP: step 1/1. Functionally, hydrolyzes the second messenger cAMP, which is a key regulator of many important physiological processes. Vital for female fertility. Required for learning/memory. In Drosophila melanogaster (Fruit fly), this protein is 3',5'-cyclic-AMP phosphodiesterase, isoform I.